We begin with the raw amino-acid sequence, 260 residues long: Transcription factor MYB4 (260 aa).

HTH myb-type domains follow at residues 12–64 (AVEV…LNYL) and 65–119 (RPGI…SKRS). 2 consecutive DNA-binding regions (H-T-H motif) follow at residues 40–64 (WRMLPAKAGLKRCGKSCRLRWLNYL) and 92–115 (WSIIAGRIPGRTDNEIKNHWNTHL).

It is found in the nucleus. Transcription activator involved in the spatiotemporal regulation of flavonoid biosynthesis specifically in the corms of Montbretia. Activates the promoters of enzymes involved in the biosynthesis of the flavonol myricetin and the flavonol-glycoside montbretin A (MbA). MbA is a potent inhibitor of human pancreatic alpha-amylase and is being developed as drug candidate to treat type-2 diabetes. The protein is Transcription factor MYB4 of Crocosmia x crocosmiiflora (Montbretia).